The sequence spans 694 residues: N,N-dimethylglycine/sarcosine dehydrogenase (694 aa).

It in the N-terminal section; belongs to the NADH:flavin oxidoreductase/NADH oxidase family. Monomer. The purified enzyme exists in the form of a monomer, dimer or polymer under non-denaturing conditions, but only the monomeric protein exhibits enzyme activity. Requires FAD as cofactor. It depends on NAD(+) as a cofactor. NADP(+) is required as a cofactor.

Its subcellular location is the cytoplasm. It catalyses the reaction oxidized 2[4Fe-4S]-[ferredoxin] + N,N-dimethylglycine + H2O = reduced 2[4Fe-4S]-[ferredoxin] + sarcosine + formaldehyde + 2 H(+). The enzyme catalyses oxidized 2[4Fe-4S]-[ferredoxin] + sarcosine + H2O = reduced 2[4Fe-4S]-[ferredoxin] + formaldehyde + glycine + 2 H(+). Ca(2+) increases the activity by 12%, while the other metal ions tested have no or slightly inhibitory effects. The chelating agent EDTA inhibits the activity by 33%. In terms of biological role, involved in degradation of glycine betaine. Catalyzes the demethylation of both N,N-dimethylglycine (DMG) and sarcosine, releasing formaldehyde and forming glycine as the final product. Does not show activity toward trimethylamine (TMA), histamine, glycine betaine (GB) or choline. The C-N bond in DMG is probably oxidized by removal of a hydride equivalent to form a labile imine intermediate, which is then spontaneously hydrolyzed in the presence of water, producing sarcosine and formaldehyde. The two protons subtracted from DMG are transferred to the non-covalently bound FAD, resulting in the reduced form of FAD, which is subsequently reoxidized by coupling with reduction of the enzyme-bound NAD(P)(+). Regeneration of NAD(P)(+) is achieved by electron transfer to the [4Fe-4S] cluster in the probable membrane-anchored ferredoxin csal_0991. The polypeptide is N,N-dimethylglycine/sarcosine dehydrogenase (Chromohalobacter salexigens (strain ATCC BAA-138 / DSM 3043 / CIP 106854 / NCIMB 13768 / 1H11)).